Consider the following 196-residue polypeptide: Probable GTP-binding protein EngB (196 aa).

The EngB-type G domain occupies 24–196; the sequence is ELSEVALSGR…IWNLIEPYIS (173 aa). GTP-binding positions include 32 to 39, 59 to 63, 77 to 80, 144 to 147, and 176 to 178; these read GRSNVGKS, GKTQT, DVPG, TKED, and YSS. The Mg(2+) site is built by Ser39 and Thr61.

This sequence belongs to the TRAFAC class TrmE-Era-EngA-EngB-Septin-like GTPase superfamily. EngB GTPase family. The cofactor is Mg(2+).

Its function is as follows. Necessary for normal cell division and for the maintenance of normal septation. The chain is Probable GTP-binding protein EngB from Staphylococcus aureus (strain MRSA252).